The primary structure comprises 146 residues: Holo-[acyl-carrier-protein] synthase (146 aa).

Asp-8 and Glu-61 together coordinate Mg(2+).

It belongs to the P-Pant transferase superfamily. AcpS family. It depends on Mg(2+) as a cofactor.

The protein resides in the cytoplasm. The catalysed reaction is apo-[ACP] + CoA = holo-[ACP] + adenosine 3',5'-bisphosphate + H(+). Functionally, transfers the 4'-phosphopantetheine moiety from coenzyme A to a Ser of acyl-carrier-protein. The protein is Holo-[acyl-carrier-protein] synthase of Rhodopseudomonas palustris (strain TIE-1).